The primary structure comprises 219 residues: Occludin/ELL domain-containing protein 1 (219 aa).

Residues 1–110 (MQIHAGPASR…DYELKYPPVT (110 aa)) are disordered. Over residues 17 to 43 (LARLSGPEATCNSRPAARGRQRAAAPR) the composition is skewed to low complexity. The segment covering 72–93 (VFADELRPREPLHPEKHPRDLG) has biased composition (basic and acidic residues). One can recognise an OCEL domain in the interval 100–210 (PDYELKYPPV…QIRKFDDQQD (111 aa)).

This sequence belongs to the ELL/occludin family.

The protein is Occludin/ELL domain-containing protein 1 (Ocel1) of Mus musculus (Mouse).